Reading from the N-terminus, the 444-residue chain is Probable D-serine dehydratase (444 aa).

An N6-(pyridoxal phosphate)lysine modification is found at K110.

It belongs to the serine/threonine dehydratase family. DsdA subfamily. Pyridoxal 5'-phosphate serves as cofactor.

It catalyses the reaction D-serine = pyruvate + NH4(+). The chain is Probable D-serine dehydratase from Burkholderia thailandensis (strain ATCC 700388 / DSM 13276 / CCUG 48851 / CIP 106301 / E264).